Consider the following 131-residue polypeptide: Small ribosomal subunit protein uS8 (131 aa).

The protein belongs to the universal ribosomal protein uS8 family. Part of the 30S ribosomal subunit. Contacts proteins S5 and S12.

Functionally, one of the primary rRNA binding proteins, it binds directly to 16S rRNA central domain where it helps coordinate assembly of the platform of the 30S subunit. The sequence is that of Small ribosomal subunit protein uS8 from Alkalilimnicola ehrlichii (strain ATCC BAA-1101 / DSM 17681 / MLHE-1).